The following is a 494-amino-acid chain: NADH-quinone oxidoreductase subunit N (494 aa).

The next 14 membrane-spanning stretches (helical) occupy residues 13–33, 43–63, 82–102, 117–137, 138–158, 169–189, 209–229, 243–263, 277–297, 311–331, 332–352, 380–400, 412–432, and 461–481; these read LIALLPLLVTCMSAIVVMLAI, FVLTVLGLNLALLSLLPAMGV, MALVLAASLACVTLTHAYLGG, LLILLSAAGGLVLASAQHLVG, LFIGLELLSVPTYGMIAYAFF, YMVLSAAGSAFLLFGMALLYA, LLVELGIGMMLIGLAFKLSLV, PAPVAAFLATASKVAVFAVLL, LNELLTLIAIASILFGNLLAL, IAHFGYLLVALIASQGLAVEA, IGVYLATYVLTSLGAFGVITL, AVLTVMMLSLAGIPLTAGFIG, QLWWLLGAMVLGSAIGVFYYL, and IMLLVVALLAFFLGVYPQPLL.

It belongs to the complex I subunit 2 family. In terms of assembly, NDH-1 is composed of 13 different subunits. Subunits NuoA, H, J, K, L, M, N constitute the membrane sector of the complex.

It is found in the cell inner membrane. The enzyme catalyses a quinone + NADH + 5 H(+)(in) = a quinol + NAD(+) + 4 H(+)(out). In terms of biological role, NDH-1 shuttles electrons from NADH, via FMN and iron-sulfur (Fe-S) centers, to quinones in the respiratory chain. The immediate electron acceptor for the enzyme in this species is believed to be ubiquinone. Couples the redox reaction to proton translocation (for every two electrons transferred, four hydrogen ions are translocated across the cytoplasmic membrane), and thus conserves the redox energy in a proton gradient. The chain is NADH-quinone oxidoreductase subunit N from Ectopseudomonas mendocina (strain ymp) (Pseudomonas mendocina).